A 524-amino-acid chain; its full sequence is Glutamyl-tRNA(Gln) amidotransferase subunit A (524 aa).

Residues lysine 109 and serine 184 each act as charge relay system in the active site. The active-site Acyl-ester intermediate is the serine 208.

This sequence belongs to the amidase family. GatA subfamily. In terms of assembly, heterotrimer of A, B and C subunits.

It catalyses the reaction L-glutamyl-tRNA(Gln) + L-glutamine + ATP + H2O = L-glutaminyl-tRNA(Gln) + L-glutamate + ADP + phosphate + H(+). In terms of biological role, allows the formation of correctly charged Gln-tRNA(Gln) through the transamidation of misacylated Glu-tRNA(Gln) in organisms which lack glutaminyl-tRNA synthetase. The reaction takes place in the presence of glutamine and ATP through an activated gamma-phospho-Glu-tRNA(Gln). The polypeptide is Glutamyl-tRNA(Gln) amidotransferase subunit A (Tropheryma whipplei (strain Twist) (Whipple's bacillus)).